Consider the following 490-residue polypeptide: Pyridine nucleotide-disulfide oxidoreductase domain-containing protein 1 (490 aa).

This sequence belongs to the class-I pyridine nucleotide-disulfide oxidoreductase family. PYROXD1 subfamily. It depends on FAD as a cofactor.

Its subcellular location is the nucleus. It localises to the cytoplasm. The protein localises to the myofibril. It is found in the sarcomere. Functionally, probable FAD-dependent oxidoreductase; involved in the cellular oxidative stress response. Required for normal sarcomere structure and muscle fiber integrity. The sequence is that of Pyridine nucleotide-disulfide oxidoreductase domain-containing protein 1 (pyroxd1) from Danio rerio (Zebrafish).